The sequence spans 524 residues: Cytochrome P450 monooxygenase lnaC (524 aa).

The helical transmembrane segment at 16–36 (ALAVSCIAVSLFLLSPWIAYA) threads the bilayer. Asn150 carries an N-linked (GlcNAc...) asparagine glycan. Cys471 serves as a coordination point for heme.

It belongs to the cytochrome P450 family. Requires heme as cofactor.

The protein resides in the membrane. The protein operates within secondary metabolite biosynthesis. Its function is as follows. Cytochrome P450 monooxygenase; part of the lna gene cluster that mediates the biosynthesis of diastereomeric piperazines. Lna and lnb clusters encode sets of enzymes that produce overlapping sets of previously undescribed metabolites such as piperazinomycin-like metabolites or morpholine. The lna and lnb biosynthetic pathways appear to be part of a signaling network that controls the formation of sclerotia, a resilient overwintering structure. One primary function of the non-canonical nonribosomal peptide synthetases lnaA and lnbA consists in the reduction of L-tyrosine. The presence in the clusters of tailoring enzymes such as the oxidoreductases lnaB, lnbB, lnaE or lnbE, as well as of the cytochrome P450 monooxygenases lnaC, lnaD, or lnbC, might explain formation of various diastereomeric piperazines. The protein is Cytochrome P450 monooxygenase lnaC of Aspergillus flavus (strain ATCC 200026 / FGSC A1120 / IAM 13836 / NRRL 3357 / JCM 12722 / SRRC 167).